Reading from the N-terminus, the 581-residue chain is Pentatricopeptide repeat-containing protein At1g34160 (581 aa).

PPR repeat units follow at residues 67–101, 108–142, 143–173, 174–208, 209–239, 240–270, 272–306, 307–341, and 342–372; these read LTND…SSSS, DALT…GLSA, DSLL…MPVR, DVAS…GIRR, SEVT…YSND, NVIV…FTGK, SVVT…GIKP, DDVS…GVER, and NMKH…MSMI. The interval 377-452 is type E motif; sequence LWQSLLGASE…IPGLSYIEAK (76 aa). Positions 453-483 are type E(+) motif; that stretch reads GTIHEFYNSDKSHEQWREIYEKIDEIRFKIR. The tract at residues 484–581 is type DYW motif; sequence EDGYVAQTGL…DGSCSCRDFW (98 aa).

Belongs to the PPR family. PCMP-H subfamily.

The sequence is that of Pentatricopeptide repeat-containing protein At1g34160 (PCMP-H68) from Arabidopsis thaliana (Mouse-ear cress).